A 33-amino-acid chain; its full sequence is Beta-amanitin proprotein (33 aa).

Residues 1–10 (MSDINATRLP) constitute a propeptide that is removed on maturation. A cross-link (cyclopeptide (Ile-Pro)) is located at residues 11–18 (IWGIGCDP). Residues 12-16 (WGIGC) constitute a cross-link (2'-cysteinyl-6'-hydroxytryptophan sulfoxide (Trp-Cys)). The propeptide occupies 19-33 (CVGDDVAALTTRGEA).

This sequence belongs to the MSDIN fungal toxin family. Post-translationally, processed by the macrocyclase-peptidase enzyme POPB to yield a toxic cyclic decapeptide. POPB first removes 10 residues from the N-terminus. Conformational trapping of the remaining peptide forces the enzyme to release this intermediate rather than proceed to macrocyclization. The enzyme rebinds the remaining peptide in a different conformation and catalyzes macrocyclization of the N-terminal 8 residues.

Functionally, toxin belonging to the bicyclic octapeptides amatoxins that acts by binding non-competitively to RNA polymerase II and greatly slowing the elongation of transcripts from target promoters. This Amanita rimosa protein is Beta-amanitin proprotein.